Reading from the N-terminus, the 396-residue chain is Elongation factor Tu (396 aa).

The region spanning K10–T206 is the tr-type G domain. The interval G19–T26 is G1. G19–T26 serves as a coordination point for GTP. T26 is a binding site for Mg(2+). The segment at G60–S64 is G2. Positions D81–G84 are G3. GTP is bound by residues D81–H85 and N136–D139. The G4 stretch occupies residues N136–D139. A G5 region spans residues S174–L176.

The protein belongs to the TRAFAC class translation factor GTPase superfamily. Classic translation factor GTPase family. EF-Tu/EF-1A subfamily. In terms of assembly, monomer.

It is found in the cytoplasm. It catalyses the reaction GTP + H2O = GDP + phosphate + H(+). GTP hydrolase that promotes the GTP-dependent binding of aminoacyl-tRNA to the A-site of ribosomes during protein biosynthesis. This chain is Elongation factor Tu, found in Pelagibacter ubique (strain HTCC1062).